Reading from the N-terminus, the 485-residue chain is Acetyl-coenzyme A carboxylase carboxyl transferase subunit beta, chloroplastic (485 aa).

In terms of domain architecture, CoA carboxyltransferase N-terminal spans 218–485; it reads LWIQCDNCYA…FFPLNKNEIK (268 aa). Zn(2+) is bound by residues Cys-222, Cys-225, Cys-241, and Cys-244. A C4-type zinc finger spans residues 222-244; that stretch reads CDNCYALIYKKALKFKMNVCEQC.

The protein belongs to the AccD/PCCB family. In terms of assembly, acetyl-CoA carboxylase is a heterohexamer composed of biotin carboxyl carrier protein, biotin carboxylase and 2 subunits each of ACCase subunit alpha and ACCase plastid-coded subunit beta (accD). It depends on Zn(2+) as a cofactor.

It is found in the plastid. It localises to the chloroplast stroma. It catalyses the reaction N(6)-carboxybiotinyl-L-lysyl-[protein] + acetyl-CoA = N(6)-biotinyl-L-lysyl-[protein] + malonyl-CoA. The protein operates within lipid metabolism; malonyl-CoA biosynthesis; malonyl-CoA from acetyl-CoA: step 1/1. Its function is as follows. Component of the acetyl coenzyme A carboxylase (ACC) complex. Biotin carboxylase (BC) catalyzes the carboxylation of biotin on its carrier protein (BCCP) and then the CO(2) group is transferred by the transcarboxylase to acetyl-CoA to form malonyl-CoA. This Aethionema cordifolium (Lebanon stonecress) protein is Acetyl-coenzyme A carboxylase carboxyl transferase subunit beta, chloroplastic.